The chain runs to 102 residues: Small ribosomal subunit protein uS14 (102 aa).

The protein belongs to the universal ribosomal protein uS14 family. In terms of assembly, part of the 30S ribosomal subunit. Contacts proteins S3 and S10.

Its function is as follows. Binds 16S rRNA, required for the assembly of 30S particles and may also be responsible for determining the conformation of the 16S rRNA at the A site. This is Small ribosomal subunit protein uS14 from Wolbachia pipientis subsp. Culex pipiens (strain wPip).